Reading from the N-terminus, the 720-residue chain is 1-deoxy-D-xylulose-5-phosphate synthase 1, chloroplastic (720 aa).

The transit peptide at Met1 to Ser51 directs the protein to the chloroplast. Residues Leu35–Ser46 are compositionally biased toward basic residues. A disordered region spans residues Leu35–Asp74. The segment covering Thr56 to Ser65 has biased composition (basic and acidic residues). Residues His142 and Gly183–Ser185 each bind thiamine diphosphate. Position 214 (Asp214) interacts with Mg(2+). Thiamine diphosphate is bound by residues Gly215–Ala216, Asn243, Tyr364, and Glu446. Asn243 serves as a coordination point for Mg(2+).

The protein belongs to the transketolase family. DXPS subfamily. In terms of assembly, homodimer. Mg(2+) is required as a cofactor. Requires thiamine diphosphate as cofactor.

The protein localises to the plastid. It is found in the chloroplast stroma. It carries out the reaction D-glyceraldehyde 3-phosphate + pyruvate + H(+) = 1-deoxy-D-xylulose 5-phosphate + CO2. Its pathway is metabolic intermediate biosynthesis; 1-deoxy-D-xylulose 5-phosphate biosynthesis; 1-deoxy-D-xylulose 5-phosphate from D-glyceraldehyde 3-phosphate and pyruvate: step 1/1. Catalyzes the acyloin condensation reaction between C atoms 2 and 3 of pyruvate and glyceraldehyde 3-phosphate to yield 1-deoxy-D-xylulose-5-phosphate (DXP). Is a limiting enzyme for plastidic isoprenoid biosynthesis and essential for chloroplast development. This is 1-deoxy-D-xylulose-5-phosphate synthase 1, chloroplastic (CLA1) from Oryza sativa subsp. japonica (Rice).